A 106-amino-acid chain; its full sequence is Trp operon repressor homolog (106 aa).

Residues Gln-59–Ile-82 mediate DNA binding.

This sequence belongs to the TrpR family. Homodimer.

The protein resides in the cytoplasm. Its function is as follows. This protein is an aporepressor. When complexed with L-tryptophan it binds the operator region of the trp operon and prevents the initiation of transcription. This is Trp operon repressor homolog from Histophilus somni (strain 2336) (Haemophilus somnus).